Consider the following 177-residue polypeptide: Alkyl hydroperoxide reductase AhpD (177 aa).

Catalysis depends on cysteine 133, which acts as the Proton donor. Cysteine 133 and cysteine 136 are disulfide-bonded. Cysteine 136 acts as the Cysteine sulfenic acid (-SOH) intermediate in catalysis.

This sequence belongs to the AhpD family.

It carries out the reaction N(6)-[(R)-dihydrolipoyl]-L-lysyl-[lipoyl-carrier protein] + a hydroperoxide = N(6)-[(R)-lipoyl]-L-lysyl-[lipoyl-carrier protein] + an alcohol + H2O. Its function is as follows. Antioxidant protein with alkyl hydroperoxidase activity. Required for the reduction of the AhpC active site cysteine residues and for the regeneration of the AhpC enzyme activity. This chain is Alkyl hydroperoxide reductase AhpD, found in Coxiella burnetii (strain CbuG_Q212) (Coxiella burnetii (strain Q212)).